The primary structure comprises 109 residues: Nucleoid-associated protein VV1_2004 (109 aa).

Belongs to the YbaB/EbfC family. As to quaternary structure, homodimer.

It is found in the cytoplasm. The protein localises to the nucleoid. Functionally, binds to DNA and alters its conformation. May be involved in regulation of gene expression, nucleoid organization and DNA protection. The polypeptide is Nucleoid-associated protein VV1_2004 (Vibrio vulnificus (strain CMCP6)).